Reading from the N-terminus, the 500-residue chain is Neuronal acetylcholine receptor subunit beta-2 (500 aa).

An N-terminal signal peptide occupies residues 1 to 24; that stretch reads MAGHSNSMALFSFSLLWLCSGVLG. Topologically, residues 25 to 237 are extracellular; the sequence is TDTEERLVEH…IIRRKPLFYT (213 aa). N-linked (GlcNAc...) asparagine glycosylation is found at N50 and N167. A disulfide bridge links C154 with C168. The chain crosses the membrane as a helical span at residues 238–258; it reads INLIIPCVLITSLAILVFYLP. The Cytoplasmic segment spans residues 259–266; it reads SDCGEKMT. The helical transmembrane segment at 267–287 threads the bilayer; it reads LCISVLLALTVFLLLISKIVP. Residues 288–299 lie on the Extracellular side of the membrane; that stretch reads PTSLDVPLVGKY. A helical membrane pass occupies residues 300-320; it reads LMFTMVLVTFSIVTSVCVLNV. Over 321 to 458 the chain is Cytoplasmic; sequence HHRSPTTHTM…WKYVAMVIDR (138 aa). The helical transmembrane segment at 459-479 threads the bilayer; sequence LFLWIFVFVCVFGTVGMFLQP.

This sequence belongs to the ligand-gated ion channel (TC 1.A.9) family. Acetylcholine receptor (TC 1.A.9.1) subfamily. Beta-2/CHRNB2 sub-subfamily. In terms of assembly, neuronal AChR is a heteropentamer composed of two different types of subunits: alpha and beta. CHRNB2/Beta-2 subunit can be combined to CHRNA2/alpha-2, CHRNA3/alpha-3 or CHRNA4/alpha-4, CHRNA5/alpha-5, CHRNA6/alpha-6 and CHRNB3/beta-3 to give rise to functional receptors. CHRNA2:CHRNB2 and CHRNA4:CHRNB2 nAChR complexes exist in two subtypes: LS (low agonist sensitivity) with a (CHRNA2/4)3:(CHRNB2)2 and HS (high agonist sensitivity) with a (CHRNA2/4)2:(CHRNB2)3 stoichiometry; the subtypes differ in their subunit binding interfaces which are involved in ligand binding. Cells produce predominantly an (CHRNA4)3:(CHRNB2)2 nAChR. The stoichiometric form (CHRNA4)2:(CHRNB2)3 expression is selectively up-regulated by nicotine and has lower single channel conductance and calcium permeability. Also part of the stoichiometric forms: (CHRNA4:CHRNB2)2:CHRNB3 or (CHRNA6:CHRNB2)2:CHRNB3. Can form heteropentamers with CHRNA7, mainly found in basal forebrain cholinergic neurons. Interacts with RIC3; which is required for proper folding and assembly. Interacts with LYPD6. Expressed in most regions of the CNS.

It localises to the synaptic cell membrane. The protein localises to the cell membrane. It carries out the reaction Ca(2+)(in) = Ca(2+)(out). The catalysed reaction is K(+)(in) = K(+)(out). It catalyses the reaction Na(+)(in) = Na(+)(out). With respect to regulation, activated by a myriad of ligands such as acetylcholine, cytisine, nicotine, choline and epibatidine. Channel potentiation by calcium is stoichiometry-selective, CHRNA4:CHRNB2 nACh receptor is achieved by calcium association with topographically distinct sites framed by anionic residues within the CHRNA4 subunit and between the CHRNA4 and CHRNB2 subunits. Oligomeric amyloid-beta protein 42 activates specifially CHRNA7:CHRNB2 nAchRs. nAChR activity is inhibited by the antagonist alpha-conotoxins BuIA, PnIA, PnIC, GID and MII, small disulfide-constrained peptides from cone snails. Component of neuronal acetylcholine receptors (nAChRs) that function as pentameric, ligand-gated cation channels with high calcium permeability among other activities. nAChRs are excitatory neurotrasnmitter receptors formed by a collection of nAChR subunits known to mediate synaptic transmission in the nervous system and the neuromuscular junction. Each nAchR subunit confers differential attributes to channel properties, including activation, deactivation and desensitization kinetics, pH sensitivity, cation permeability, and binding to allosteric modulators. CHRNB2 forms heteropentameric neuronal acetylcholine receptors with CHRNA2, CHRNA3, CHRNA4 and CHRNA6, as well as CHRNA5 and CHRNB3 as accesory subunits. Found in two major stoichiometric forms,(CHRNA4)3:(CHRNB2)2 and (CHRNA4)2:(CHRNB2)3, the two stoichiometric forms differ in their unitary conductance, calcium permeability, ACh sensitivity and potentiation by divalent cation. Heteropentameric channels with CHRNA6 and CHRNA4 exhibit high sensitivity to ACh and nicotine and are predominantly expressed in only a few brain areas, including dopaminergic neurons, norepirephrine neurons and cells of the visual system. nAChrs containing CHRNA6 subunits mediate endogenous cholinergic modulation of dopamine and gamma-aminobutyric acid (GABA) release in response to nicotine at nerve terminals. Also forms functional nAChRs with other subunits such as CHRNA7:CHRNB2, mainly expressed in basal forebrain cholinergic neurons. This Rattus norvegicus (Rat) protein is Neuronal acetylcholine receptor subunit beta-2 (Chrnb2).